The sequence spans 592 residues: PiggyBac transposable element-derived protein 2 (592 aa).

The disordered stretch occupies residues 31–69; sequence EEEESNNNREEIFIAPPDNAAGEFTDEDSGDEDSQRGAH.

The sequence is that of PiggyBac transposable element-derived protein 2 (PGBD2) from Homo sapiens (Human).